A 185-amino-acid chain; its full sequence is Ribosome-recycling factor (185 aa).

The protein belongs to the RRF family.

The protein localises to the cytoplasm. Its function is as follows. Responsible for the release of ribosomes from messenger RNA at the termination of protein biosynthesis. May increase the efficiency of translation by recycling ribosomes from one round of translation to another. In Nitrosomonas eutropha (strain DSM 101675 / C91 / Nm57), this protein is Ribosome-recycling factor.